We begin with the raw amino-acid sequence, 760 residues long: Sphingosine kinase B (760 aa).

The interval 1–108 is disordered; the sequence is MENNNNEPAE…NNNNNEPVTS (108 aa). Residues 12 to 39 show a composition bias toward basic and acidic residues; sequence VQEKGPKLKNDIDLNDQFKDEKEKKEEI. Over residues 40–106 the composition is skewed to low complexity; sequence SSSSIENKNN…NNNNNNNEPV (67 aa). One can recognise a DAGKc domain in the interval 247–383; that stretch reads PKNRKIRILI…LDVCIVQQPT (137 aa). Residues 257–259 and threonine 288 each bind ATP; that span reads NPK. 313–316 lines the substrate pocket; it reads SGDG. Aspartate 315 serves as the catalytic Proton donor/acceptor. ATP-binding positions include glutamate 320 and 345-347; that span reads GTG. Residues 394-438 form a disordered region; sequence TVTTTTTTTSPTSASPTITSANNNNNNNNNNNNNNNNNNNNNNNN. Aspartate 461 is a substrate binding site. 2 residues coordinate ATP: arginine 468 and arginine 474. The segment at 535–605 is disordered; it reads DNDNNNKNKN…SSPRSDINMS (71 aa). Over residues 549–597 the composition is skewed to low complexity; that stretch reads EINSTTSNNNNNNNTTTTSTSSSTSTSTSTSSLTATTTTAKSTNSLSSS. Position 734-736 (734-736) interacts with ATP; the sequence is DGE.

It carries out the reaction a sphingoid base + ATP = a sphingoid 1-phosphate + ADP + H(+). Inhibited by N,N,-dimethylsphingosine. Catalyzes the phosphorylation of sphingosine to form sphingosine-1-phosphate (S1P), which probably acts intracellularly as a second messenger perhaps by promoting cell proliferation. This Dictyostelium discoideum (Social amoeba) protein is Sphingosine kinase B (sgkB).